Here is a 261-residue protein sequence, read N- to C-terminus: Carnitinyl-CoA dehydratase (261 aa).

Residue glutamate 111 is the Nucleophile of the active site. Residue glutamate 131 is the Proton acceptor of the active site.

The protein belongs to the enoyl-CoA hydratase/isomerase family.

It carries out the reaction (R)-carnitinyl-CoA = crotonobetainyl-CoA + H2O. It participates in amine and polyamine metabolism; carnitine metabolism. Functionally, catalyzes the reversible dehydration of L-carnitinyl-CoA to crotonobetainyl-CoA. This Escherichia coli O6:K15:H31 (strain 536 / UPEC) protein is Carnitinyl-CoA dehydratase.